The following is a 708-amino-acid chain: Capsid scaffolding protein (708 aa).

Catalysis depends on charge relay system residues histidine 63, serine 132, and histidine 157. 3 disordered regions span residues 269 to 339, 455 to 565, and 593 to 619; these read ASAE…MSHP, HPSY…QQQR, and ALPSAASSSPTTTTVCTPTGELTSGGG. Low complexity predominate over residues 284 to 293; it reads PAAGARVPSS. Residues 294–311 are compositionally biased toward pro residues; it reads SPSPPVEPPSPVQPPALP. Residues 326-339 are compositionally biased toward low complexity; the sequence is SPSEPAEAASMSHP. The interaction with pAP stretch occupies residues 333 to 352; that stretch reads AASMSHPLSAAVPAATAPPG. Positions 498-513 are enriched in basic residues; it reads KQHRHGGSGGHNKRRK. 2 short sequence motifs (nuclear localization signal) span residues 510-515 and 537-543; these read KRRKET and RARKRLK. Positions 593–611 are enriched in low complexity; sequence ALPSAASSSPTTTTVCTPT. The tract at residues 688 to 708 is interaction with major capsid protein; it reads PPKDMVDLNRRIFVAALNKLE.

The protein belongs to the herpesviridae capsid scaffolding protein family. In terms of assembly, homomultimer. Interacts with major capsid protein. As to quaternary structure, exists in a monomer-dimer equilibrium with the dimer being the active species. In terms of processing, capsid scaffolding protein is cleaved by assemblin after formation of the spherical procapsid. As a result, the capsid obtains its mature, icosahedral shape. Cleavages occur at two or more sites: release (R-site) and maturation (M-site).

It localises to the host cytoplasm. It is found in the host nucleus. The catalysed reaction is Cleaves -Ala-|-Ser- and -Ala-|-Ala- bonds in the scaffold protein.. In terms of biological role, acts as a scaffold protein by binding major capsid protein in the cytoplasm, inducing the nuclear localization of both proteins. Multimerizes in the nucleus such as major capsid protein forms the icosahedral T=16 capsid. Autocatalytic cleavage releases the assembly protein, and subsequently abolishes interaction with major capsid protein. Cleavages products are evicted from the capsid before or during DNA packaging. Protease that plays an essential role in virion assembly within the nucleus. Catalyzes the cleavage of the assembly protein after formation of the spherical procapsid. By that cleavage, the capsid matures and gains its icosahedral shape. The cleavage sites seem to include -Ala-Ser-, -Ala-Ala-, as well as Ala-Thr bonds. Assemblin and cleavages products are evicted from the capsid before or during DNA packaging. Functionally, plays a major role in capsid assembly. Acts as a scaffold protein by binding major capsid protein. Multimerizes in the nucleus such as major capsid protein forms the icosahedral T=16 capsid. Cleaved by assemblin after capsid completion. The cleavages products are evicted from the capsid before or during DNA packaging. The protein is Capsid scaffolding protein (UL80) of Homo sapiens (Human).